Here is a 605-residue protein sequence, read N- to C-terminus: Capsid scaffolding protein (605 aa).

Catalysis depends on charge relay system residues histidine 48, serine 116, and histidine 139. The segment at 235–274 (ASDAPDLQKPDKALQSPPPASTDPATMLSGNAGEGATACG) is disordered. Residues 281–300 (QDLISVPRNTFMTLLQTNLD) are interaction with pAP. Disordered stretches follow at residues 403 to 432 (DYVP…PGED) and 489 to 588 (PHQS…KSVS). The Nuclear localization signal motif lies at 410-416 (RSNKRKR). A compositionally biased stretch (polar residues) spans 568–579 (ASASGVAQSKEP). The segment at 585-605 (KSVSAHLKSIFCEELLNKRVA) is interaction with major capsid protein.

It belongs to the herpesviridae capsid scaffolding protein family. Homomultimer. Interacts with major capsid protein. In terms of assembly, exists in a monomer-dimer equilibrium with the dimer being the active species. In terms of processing, capsid scaffolding protein is cleaved by assemblin after formation of the spherical procapsid. As a result, the capsid obtains its mature, icosahedral shape. Cleavages occur at two or more sites: release (R-site) and maturation (M-site).

Its subcellular location is the host cytoplasm. It is found in the host nucleus. The catalysed reaction is Cleaves -Ala-|-Ser- and -Ala-|-Ala- bonds in the scaffold protein.. Its function is as follows. Acts as a scaffold protein by binding major capsid protein in the cytoplasm, inducing the nuclear localization of both proteins. Multimerizes in the nucleus such as major capsid protein forms the icosahedral T=16 capsid. Autocatalytic cleavage releases the assembly protein, and subsequently abolishes interaction with major capsid protein. Cleavages products are evicted from the capsid before or during DNA packaging. Functionally, protease that plays an essential role in virion assembly within the nucleus. Catalyzes the cleavage of the assembly protein after formation of the spherical procapsid. By that cleavage, the capsid matures and gains its icosahedral shape. The cleavage sites seem to include -Ala-Ser-, -Ala-Ala-, as well as Ala-Thr bonds. Assemblin and cleavages products are evicted from the capsid before or during DNA packaging. In terms of biological role, plays a major role in capsid assembly. Acts as a scaffold protein by binding major capsid protein. Multimerizes in the nucleus such as major capsid protein forms the icosahedral T=16 capsid. Cleaved by assemblin after capsid completion. The cleavages products are evicted from the capsid before or during DNA packaging. The chain is Capsid scaffolding protein from Homo sapiens (Human).